The sequence spans 342 residues: Holliday junction branch migration complex subunit RuvB (342 aa).

The tract at residues 1–184 (MEENFDIREQ…FGINLHLEYY (184 aa)) is large ATPase domain (RuvB-L). ATP contacts are provided by residues leucine 23, arginine 24, glycine 65, lysine 68, threonine 69, threonine 70, 131–133 (EDY), arginine 174, tyrosine 184, and arginine 221. A Mg(2+)-binding site is contributed by threonine 69. The segment at 185-255 (DDDVLTSIIR…IARFALEALN (71 aa)) is small ATPAse domain (RuvB-S). The tract at residues 258 to 342 (RYGLDEIDNK…YNSQKTLFDD (85 aa)) is head domain (RuvB-H). DNA is bound by residues arginine 313 and arginine 318.

The protein belongs to the RuvB family. In terms of assembly, homohexamer. Forms an RuvA(8)-RuvB(12)-Holliday junction (HJ) complex. HJ DNA is sandwiched between 2 RuvA tetramers; dsDNA enters through RuvA and exits via RuvB. An RuvB hexamer assembles on each DNA strand where it exits the tetramer. Each RuvB hexamer is contacted by two RuvA subunits (via domain III) on 2 adjacent RuvB subunits; this complex drives branch migration. In the full resolvosome a probable DNA-RuvA(4)-RuvB(12)-RuvC(2) complex forms which resolves the HJ.

The protein localises to the cytoplasm. The enzyme catalyses ATP + H2O = ADP + phosphate + H(+). Its function is as follows. The RuvA-RuvB-RuvC complex processes Holliday junction (HJ) DNA during genetic recombination and DNA repair, while the RuvA-RuvB complex plays an important role in the rescue of blocked DNA replication forks via replication fork reversal (RFR). RuvA specifically binds to HJ cruciform DNA, conferring on it an open structure. The RuvB hexamer acts as an ATP-dependent pump, pulling dsDNA into and through the RuvAB complex. RuvB forms 2 homohexamers on either side of HJ DNA bound by 1 or 2 RuvA tetramers; 4 subunits per hexamer contact DNA at a time. Coordinated motions by a converter formed by DNA-disengaged RuvB subunits stimulates ATP hydrolysis and nucleotide exchange. Immobilization of the converter enables RuvB to convert the ATP-contained energy into a lever motion, pulling 2 nucleotides of DNA out of the RuvA tetramer per ATP hydrolyzed, thus driving DNA branch migration. The RuvB motors rotate together with the DNA substrate, which together with the progressing nucleotide cycle form the mechanistic basis for DNA recombination by continuous HJ branch migration. Branch migration allows RuvC to scan DNA until it finds its consensus sequence, where it cleaves and resolves cruciform DNA. The polypeptide is Holliday junction branch migration complex subunit RuvB (Phocaeicola vulgatus (strain ATCC 8482 / DSM 1447 / JCM 5826 / CCUG 4940 / NBRC 14291 / NCTC 11154) (Bacteroides vulgatus)).